The primary structure comprises 403 residues: Phosphoserine phosphatase RsbP (403 aa).

Positions 1-42 constitute a PAS domain; it reads MDKQLNDAPCGFLALSEEGSIIAANRTLIKILDYEPEQVIGQ. The region spanning 191–402 is the PPM-type phosphatase domain; sequence QVQIDSYYNA…DDECFILVDV (212 aa).

Mn(2+) is required as a cofactor.

The enzyme catalyses O-phospho-L-serine + H2O = L-serine + phosphate. It catalyses the reaction O-phospho-D-serine + H2O = D-serine + phosphate. Its function is as follows. Positive regulator of sigma-B activity. Dephosphorylates RsbV in response to energy stress. The sequence is that of Phosphoserine phosphatase RsbP (rsbP) from Bacillus subtilis (strain 168).